A 393-amino-acid polypeptide reads, in one-letter code: NAD(P)H-quinone oxidoreductase subunit H, chloroplastic (393 aa).

This sequence belongs to the complex I 49 kDa subunit family. In terms of assembly, NDH is composed of at least 16 different subunits, 5 of which are encoded in the nucleus.

It is found in the plastid. The protein localises to the chloroplast thylakoid membrane. The enzyme catalyses a plastoquinone + NADH + (n+1) H(+)(in) = a plastoquinol + NAD(+) + n H(+)(out). It carries out the reaction a plastoquinone + NADPH + (n+1) H(+)(in) = a plastoquinol + NADP(+) + n H(+)(out). Its function is as follows. NDH shuttles electrons from NAD(P)H:plastoquinone, via FMN and iron-sulfur (Fe-S) centers, to quinones in the photosynthetic chain and possibly in a chloroplast respiratory chain. The immediate electron acceptor for the enzyme in this species is believed to be plastoquinone. Couples the redox reaction to proton translocation, and thus conserves the redox energy in a proton gradient. This is NAD(P)H-quinone oxidoreductase subunit H, chloroplastic from Eucalyptus globulus subsp. globulus (Tasmanian blue gum).